We begin with the raw amino-acid sequence, 163 residues long: Peptidyl-prolyl cis-trans isomerase-like 1 (163 aa).

In terms of domain architecture, PPIase cyclophilin-type spans 1–155 (MATDVAVETT…TEVKIVKARV (155 aa)).

Belongs to the cyclophilin-type PPIase family. PPIL1 subfamily.

It carries out the reaction [protein]-peptidylproline (omega=180) = [protein]-peptidylproline (omega=0). Its function is as follows. PPIases accelerate the folding of proteins. It catalyzes the cis-trans isomerization of proline imidic peptide bonds in oligopeptides. In Neurospora crassa (strain ATCC 24698 / 74-OR23-1A / CBS 708.71 / DSM 1257 / FGSC 987), this protein is Peptidyl-prolyl cis-trans isomerase-like 1 (ppi-1).